The primary structure comprises 74 residues: uncharacterized protein (74 aa).

The chain crosses the membrane as a helical span at residues phenylalanine 15–valine 32.

The protein localises to the membrane. This is an uncharacterized protein from Saccharomyces cerevisiae (strain ATCC 204508 / S288c) (Baker's yeast).